The primary structure comprises 399 residues: Elongation factor Tu (399 aa).

One can recognise a tr-type G domain in the interval 10–207 (KPHMNVGTIG…AMDTYFPDPV (198 aa)). Residues 19-26 (GQIDHGKT) are G1. 19 to 26 (GQIDHGKT) contacts GTP. Thr-26 is a binding site for Mg(2+). Residues 60 to 64 (GITIN) are G2. Residues 81-84 (DCPG) form a G3 region. GTP contacts are provided by residues 81 to 85 (DCPGH) and 136 to 139 (NKVD). Residues 136-139 (NKVD) are G4. The interval 173–175 (SAL) is G5.

It belongs to the TRAFAC class translation factor GTPase superfamily. Classic translation factor GTPase family. EF-Tu/EF-1A subfamily. In terms of assembly, monomer.

Its subcellular location is the cytoplasm. It carries out the reaction GTP + H2O = GDP + phosphate + H(+). In terms of biological role, GTP hydrolase that promotes the GTP-dependent binding of aminoacyl-tRNA to the A-site of ribosomes during protein biosynthesis. This chain is Elongation factor Tu, found in Fervidobacterium islandicum.